A 409-amino-acid polypeptide reads, in one-letter code: MSKGRTDYGNGAVKYVIRAKLRANGYVERPDVVGAIFGQTEGLLGDDLDLRRLLKTGRIGRIDVKLRNENGKTVGEIIVPSSLDRVETALVAAALEQVDRIGPCRAEVEVVSIDDIRKEKRERMIRRAREILREMVSEVTPDSSELVQKVKEAVEDVEVEEYKGLPAGPNVEDSDAIIVVEGRADVANLLRCGIKNVIAVEGTNVPEAIVELSKEKTVTAFVDGDRGGELILKELLQVADVDYVAKAPKGKEVEELTRKEIKRALERKVPVEEYLKEIGERPKDKEREKGKKPKPKKRPERRGRPRKKKARPKRGPQERRLLDRLKRLKGTFRAEFLDEGLKPVKEVELDELVEKLKSEDGVRAVVLDGVITRRLVEAAREKGVKYVVGVKEGDLDPEIKKDVKIITMS.

Positions 175–261 constitute a Toprim domain; it reads DAIIVVEGRA…EVEELTRKEI (87 aa). Mg(2+) contacts are provided by glutamate 181, aspartate 223, and aspartate 225. Positions 280 to 289 are enriched in basic and acidic residues; it reads ERPKDKEREK. The segment at 280–322 is disordered; it reads ERPKDKEREKGKKPKPKKRPERRGRPRKKKARPKRGPQERRLL. The segment covering 290-314 has biased composition (basic residues); the sequence is GKKPKPKKRPERRGRPRKKKARPKR.

The protein belongs to the archaeal DnaG primase family. In terms of assembly, forms a ternary complex with MCM helicase and DNA. Component of the archaeal exosome complex. Requires Mg(2+) as cofactor.

It carries out the reaction ssDNA + n NTP = ssDNA/pppN(pN)n-1 hybrid + (n-1) diphosphate.. In terms of biological role, RNA polymerase that catalyzes the synthesis of short RNA molecules used as primers for DNA polymerase during DNA replication. Also part of the exosome, which is a complex involved in RNA degradation. Acts as a poly(A)-binding protein that enhances the interaction between heteromeric, adenine-rich transcripts and the exosome. The polypeptide is DNA primase DnaG (Methanopyrus kandleri (strain AV19 / DSM 6324 / JCM 9639 / NBRC 100938)).